A 514-amino-acid polypeptide reads, in one-letter code: Cytochrome P450 monooxygenase FUS8 (514 aa).

The chain crosses the membrane as a helical span at residues 24-44; sequence VFENLTVTNTVCAFIALFIIV. Residues N225 and N443 are each glycosylated (N-linked (GlcNAc...) asparagine). Position 460 (C460) interacts with heme.

Belongs to the cytochrome P450 family. Requires heme as cofactor.

It localises to the membrane. It functions in the pathway mycotoxin biosynthesis. Cytochrome P450 monooxygenase; part of the gene cluster that mediates the biosynthesis of the mycotoxin fusarin C. Within the cluster, FUS1, FUS2, FUS8 and FUS9 are sufficient for fusarin production. The roles of the other FUS members are yet undetermined. The fusarin C synthetase FUS1 is responsible for the condensation of one acetyl-coenzyme A (CoA) unit with six malonyl-CoA units and the amide linkage of the arising heptaketide and homoserine, subsequently releasing the first intermediate, prefusarin, as an alcohol with an open ring structure. The cytochrome P450 monooxygenase FUS8 participates in multiple oxidation processes at carbon C-20 and is able to use the FUS1 product as substrate, resulting in formation of 20-hydroxy-prefusarin. This reaction seems to be essential before the 2-pyrrolidone ring closure can be catalyzed by FUS2, generating 20-hydroxy-fusarin. FUS8 is able to further oxidizes carbon C-20 after ring closure, resulting in the formation of carboxy-fusarin C. As the last step, FUS9 methylates the hydroxyl group at C-21 to generate fusarin C. Fusarin C can then rearrange to epi-fusarin C, the (z)-isomers, and fusarin A and fusarin D. The chain is Cytochrome P450 monooxygenase FUS8 from Gibberella fujikuroi (strain CBS 195.34 / IMI 58289 / NRRL A-6831) (Bakanae and foot rot disease fungus).